Consider the following 36-residue polypeptide: ISINQDLKAITDMLLTEQIRERQRYLADLRQRLLEK.

Lysine 36 carries the lysine amide modification.

This sequence belongs to the molluscan ELH family. As to expression, bag cell neurons.

It localises to the secreted. ELH acts as a neurotransmitter locally, upon neurons of the abdominal ganglion and as a hormone by diffusing into the circulating hemolymph and modulating the activity of other organs. It specifically causes contraction of smooth muscle in the ovotestis and expulsion of the egg string. This is Egg-laying hormone from Aplysia fasciata (Mottled sea hare).